Here is a 124-residue protein sequence, read N- to C-terminus: Calvin cycle protein CP12-1, chloroplastic (124 aa).

A chloroplast-targeting transit peptide spans 1 to 47 (MTTIAAAGLNVATPRVVVRPVARVLGPVRLNYPWKFGSMKRMVVVKA). 2 cysteine pairs are disulfide-bonded: Cys68/Cys77 and Cys110/Cys119. The interval 90–124 (AASHARDKKKAGGSDPLEEYCNDNPETDECRTYDN) is disordered. Acidic residues predominate over residues 105-116 (PLEEYCNDNPET).

Belongs to the CP12 family. As to quaternary structure, monomer. Component of a complex that contains two dimers of PRK, two tetramers of GAPDH and CP12. CP12 associates with GAPDH, causing its conformation to change. This GAPDH/CP12 complex binds PRK to form a half-complex (one unit). This unit probably dimerizes due partially to interactions between the enzymes of each unit. Contains two disulfide bonds; only the oxidized protein, with two disulfide bonds, is active in complex formation. The C-terminal disulfide is involved in the interaction with GAPDH and the N-terminal disulfide mediates the binding of PRK with this binary complex. As to expression, mostly expressed in flowers, hypocotyl, cotyledons, leaves, stems, and flower stalks. Barely detectable in roots and siliques. Present in root tips and lateral roots. Accumulates in the cotyledons of etiolated seedlings.

It localises to the plastid. The protein localises to the chloroplast. Acts as a linker essential in the assembly of a core complex of PRK/GAPDH. Coordinates the reversible inactivation of chloroplast enzymes GAPDH and PRK during darkness in photosynthetic tissues. This Arabidopsis thaliana (Mouse-ear cress) protein is Calvin cycle protein CP12-1, chloroplastic (CP12-1).